The following is a 168-amino-acid chain: DAZ-associated protein 2 (168 aa).

Over residues 1–13 (MNSKGQYPTQPTY) the composition is skewed to low complexity. The tract at residues 1-25 (MNSKGQYPTQPTYPVQPPGNPVYPQ) is disordered. A PPAY motif is present at residues 39 to 42 (PPAY). At serine 77 the chain carries Phosphoserine.

In terms of assembly, interacts with SOX6. Interacts with DAZ1 and DAZL. Interacts with IL17RB. May interact with FAM168B. Interacts with INCA1. Interacts with EIF4G1 and EIF4G2. Interacts (via PPAY motif) with NEDD4 (via WW domains). Interacts with transcription factor TCF4; the interaction results in localization of DAZAP2 to the nucleus. Interacts with transcription factors TCF7 and TCF7L1. Interacts with transcription factor LEF1. Interacts with serine/threonine-protein kinase HIPK2; the interaction results in phosphorylation of DAZAP2 which causes localization of DAZAP2 to the nucleus, reduces interaction of DAZAP2 with HIPK2 and prevents DAZAP2-dependent degradation of HIPK2. Interacts with ubiquitin ligase SIAH1; the interaction is decreased following phosphorylation of DAZAP2 by HIPK2. Interacts with TP53; the interaction is triggered by DNA damage. Post-translationally, ubiquitinated by SMURF2, leading to proteasomal degradation. Ubiquitinated by NEDD4, leading to proteasomal degradation. In terms of processing, following DNA damage, phosphorylated by HIPK2 which promotes DAZAP2 localization to the nucleus, reduces interaction of DAZAP2 with HIPK2 and SIAH1, and prevents DAZAP2-dependent ubiquitination of HIPK2 by E3 ubiquitin-protein ligase SIAH1 and subsequent HIPK2 proteasomal degradation. In terms of tissue distribution, widely expressed. Highly expressed in brain.

The protein localises to the cytoplasm. It is found in the nucleus. Its subcellular location is the nucleus speckle. It localises to the nuclear body. The protein resides in the stress granule. In terms of biological role, in unstressed cells, promotes SIAH1-mediated polyubiquitination and degradation of the serine/threonine-protein kinase HIPK2, probably by acting as a loading factor that potentiates complex formation between HIPK2 and ubiquitin ligase SIAH1. In response to DNA damage, localizes to the nucleus following phosphorylation by HIPK2 and modulates the expression of a subset of TP53/p53 target genes by binding to TP53 at target gene promoters. This limits the expression of a number of cell death-mediating TP53 target genes, reducing DNA damage-induced cell death. Enhances the binding of transcription factor TCF7L2/TCF4, a Wnt signaling pathway effector, to the promoters of target genes. Plays a role in stress granule formation. This chain is DAZ-associated protein 2 (Dazap2), found in Mus musculus (Mouse).